The sequence spans 179 residues: Natural killer cells antigen CD94 (179 aa).

The Cytoplasmic portion of the chain corresponds to 1 to 10 (MAVSRITRWR). Residues 11–31 (LMSVIFGIKCLFLMVTLGVLL) traverse the membrane as a helical; Signal-anchor for type II membrane protein segment. At 32 to 179 (INSFTIQNIQ…NRYICKKLPI (148 aa)) the chain is on the extracellular side. Cystine bridges form between cysteine 58/cysteine 70, cysteine 61/cysteine 72, cysteine 89/cysteine 174, and cysteine 152/cysteine 166. The region spanning 68–175 (HQCNCYFISK…CENKNRYICK (108 aa)) is the C-type lectin domain. Asparagine 93 and asparagine 109 each carry an N-linked (GlcNAc...) asparagine glycan.

As to quaternary structure, can form disulfide-bonded heterodimer with NKG2 family members KLRC1 and KLRC2. KLRD1-KLRC1 heterodimer interacts with peptide-bound MHC-E-B2M heterotrimeric complex. KLRD1 plays a prominent role in directly interacting with MHC-E. KLRD1-KLRC1 interacts with much higher affinity with peptide-bound MHC-E-B2M than KLRD1-KLRC2. Interacts with the adapter protein TYROBP/DAP12; this interaction is required for cell surface expression and cell activation.

Its subcellular location is the cell membrane. Functionally, immune receptor involved in self-nonself discrimination. In complex with KLRC1 or KLRC2 on cytotoxic and regulatory lymphocyte subsets, recognizes non-classical major histocompatibility (MHC) class Ib molecule MHC-E loaded with self-peptides derived from the signal sequence of classical MHC class Ia and non-classical MHC class Ib molecules. Enables cytotoxic cells to monitor the expression of MHC class I molecules in healthy cells and to tolerate self. Primarily functions as a ligand binding subunit as it lacks the capacity to signal. In terms of biological role, KLRD1-KLRC1 acts as an immune inhibitory receptor. Key inhibitory receptor on natural killer (NK) cells that regulates their activation and effector functions. Dominantly counteracts T cell receptor signaling on a subset of memory/effector CD8-positive T cells as part of an antigen-driven response to avoid autoimmunity. On intraepithelial CD8-positive gamma-delta regulatory T cells triggers TGFB1 secretion, which in turn limits the cytotoxic programming of intraepithelial CD8-positive alpha-beta T cells, distinguishing harmless from pathogenic antigens. In MHC-E-rich tumor microenvironment, acts as an immune inhibitory checkpoint and may contribute to progressive loss of effector functions of NK cells and tumor-specific T cells, a state known as cell exhaustion. Upon MHC-E-peptide binding, transmits intracellular signals through KLRC1 immunoreceptor tyrosine-based inhibition motifs (ITIMs) by recruiting INPP5D/SHIP-1 and INPPL1/SHIP-2 tyrosine phosphatases to ITIMs, and ultimately opposing signals transmitted by activating receptors through dephosphorylation of proximal signaling molecules. KLRD1-KLRC2 acts as an immune activating receptor. On cytotoxic lymphocyte subsets recognizes MHC-E loaded with signal sequence-derived peptides from non-classical MHC class Ib MHC-G molecules, likely playing a role in the generation and effector functions of adaptive NK cells and in maternal-fetal tolerance during pregnancy. Regulates the effector functions of terminally differentiated cytotoxic lymphocyte subsets, and in particular may play a role in adaptive NK cell response to viral infection. Upon MHC-E-peptide binding, transmits intracellular signals via the adapter protein TYROBP/DAP12, triggering the phosphorylation of proximal signaling molecules and cell activation. The polypeptide is Natural killer cells antigen CD94 (Klrd1) (Mus musculus (Mouse)).